A 100-amino-acid polypeptide reads, in one-letter code: Aspartyl/glutamyl-tRNA(Asn/Gln) amidotransferase subunit C (100 aa).

Belongs to the GatC family. In terms of assembly, heterotrimer of A, B and C subunits.

It catalyses the reaction L-glutamyl-tRNA(Gln) + L-glutamine + ATP + H2O = L-glutaminyl-tRNA(Gln) + L-glutamate + ADP + phosphate + H(+). The enzyme catalyses L-aspartyl-tRNA(Asn) + L-glutamine + ATP + H2O = L-asparaginyl-tRNA(Asn) + L-glutamate + ADP + phosphate + 2 H(+). Allows the formation of correctly charged Asn-tRNA(Asn) or Gln-tRNA(Gln) through the transamidation of misacylated Asp-tRNA(Asn) or Glu-tRNA(Gln) in organisms which lack either or both of asparaginyl-tRNA or glutaminyl-tRNA synthetases. The reaction takes place in the presence of glutamine and ATP through an activated phospho-Asp-tRNA(Asn) or phospho-Glu-tRNA(Gln). The sequence is that of Aspartyl/glutamyl-tRNA(Asn/Gln) amidotransferase subunit C from Novosphingobium aromaticivorans (strain ATCC 700278 / DSM 12444 / CCUG 56034 / CIP 105152 / NBRC 16084 / F199).